Reading from the N-terminus, the 525-residue chain is GMP synthase [glutamine-hydrolyzing] (525 aa).

A Glutamine amidotransferase type-1 domain is found at 9 to 207 (RILILDFGSQ…VLQLCACEKL (199 aa)). C86 serves as the catalytic Nucleophile. Catalysis depends on residues H181 and E183. A GMPS ATP-PPase domain is found at 208 to 400 (WTPANIVEDA…LGLPYDMVYR (193 aa)). 235 to 241 (SGGVDSS) serves as a coordination point for ATP.

In terms of assembly, homodimer.

It catalyses the reaction XMP + L-glutamine + ATP + H2O = GMP + L-glutamate + AMP + diphosphate + 2 H(+). It participates in purine metabolism; GMP biosynthesis; GMP from XMP (L-Gln route): step 1/1. Functionally, catalyzes the synthesis of GMP from XMP. The polypeptide is GMP synthase [glutamine-hydrolyzing] (Cellvibrio japonicus (strain Ueda107) (Pseudomonas fluorescens subsp. cellulosa)).